Here is a 134-residue protein sequence, read N- to C-terminus: Large ribosomal subunit protein eL32 (134 aa).

The protein belongs to the eukaryotic ribosomal protein eL32 family.

The polypeptide is Large ribosomal subunit protein eL32 (RpL32) (Drosophila bifasciata (Fruit fly)).